Reading from the N-terminus, the 356-residue chain is UDP-N-acetylglucosamine--N-acetylmuramyl-(pentapeptide) pyrophosphoryl-undecaprenol N-acetylglucosamine transferase (356 aa).

Residues 11 to 13, asparagine 122, serine 186, and glutamine 287 each bind UDP-N-acetyl-alpha-D-glucosamine; that span reads TGG.

The protein belongs to the glycosyltransferase 28 family. MurG subfamily.

The protein resides in the cell inner membrane. It catalyses the reaction di-trans,octa-cis-undecaprenyl diphospho-N-acetyl-alpha-D-muramoyl-L-alanyl-D-glutamyl-meso-2,6-diaminopimeloyl-D-alanyl-D-alanine + UDP-N-acetyl-alpha-D-glucosamine = di-trans,octa-cis-undecaprenyl diphospho-[N-acetyl-alpha-D-glucosaminyl-(1-&gt;4)]-N-acetyl-alpha-D-muramoyl-L-alanyl-D-glutamyl-meso-2,6-diaminopimeloyl-D-alanyl-D-alanine + UDP + H(+). It functions in the pathway cell wall biogenesis; peptidoglycan biosynthesis. Functionally, cell wall formation. Catalyzes the transfer of a GlcNAc subunit on undecaprenyl-pyrophosphoryl-MurNAc-pentapeptide (lipid intermediate I) to form undecaprenyl-pyrophosphoryl-MurNAc-(pentapeptide)GlcNAc (lipid intermediate II). In Anaplasma marginale (strain St. Maries), this protein is UDP-N-acetylglucosamine--N-acetylmuramyl-(pentapeptide) pyrophosphoryl-undecaprenol N-acetylglucosamine transferase.